Reading from the N-terminus, the 37-residue chain is Large ribosomal subunit protein bL36c (37 aa).

The protein belongs to the bacterial ribosomal protein bL36 family.

It is found in the plastid. The protein resides in the chloroplast. In Angiopteris evecta (Mule's foot fern), this protein is Large ribosomal subunit protein bL36c.